The chain runs to 398 residues: Subtilisin-like protease CPC735_050320 (398 aa).

The N-terminal stretch at 1-19 is a signal peptide; it reads MVFLGKILPLALAALSVNG. The propeptide occupies 20–117; the sequence is AEILSAPGAE…IERDQIMKAS (98 aa). The Inhibitor I9 domain occupies 35 to 115; the sequence is YIVVMKEGTS…AYIERDQIMK (81 aa). Residues 127-398 form the Peptidase S8 domain; sequence SWGLARVSSR…NRLINNGVSQ (272 aa). Catalysis depends on charge relay system residues Asp-159 and His-190. 2 N-linked (GlcNAc...) asparagine glycosylation sites follow: Asn-220 and Asn-250. Catalysis depends on Ser-344, which acts as the Charge relay system.

It belongs to the peptidase S8 family.

The protein localises to the secreted. In terms of biological role, secreted subtilisin-like serine protease with keratinolytic activity that contributes to pathogenicity. In Coccidioides posadasii (strain C735) (Valley fever fungus), this protein is Subtilisin-like protease CPC735_050320.